A 118-amino-acid polypeptide reads, in one-letter code: Ig heavy chain V region AC38 205.12 (118 aa).

A v segment region spans residues 1 to 98 (EVQLQQSGPE…EDSAVYYCAR (98 aa)). A disulfide bridge links Cys22 with Cys96. Positions 99 to 104 (GYGYDP) are d segment. The interval 105-118 (FDVWGTGTTVTVSS) is j segment.

In Mus musculus (Mouse), this protein is Ig heavy chain V region AC38 205.12.